The primary structure comprises 298 residues: Lipoyl synthase (298 aa).

Cysteine 40, cysteine 45, cysteine 51, cysteine 67, cysteine 71, cysteine 74, and serine 280 together coordinate [4Fe-4S] cluster. The Radical SAM core domain occupies 53-269 (AVRKTATFMI…KEIALSKGFS (217 aa)).

This sequence belongs to the radical SAM superfamily. Lipoyl synthase family. [4Fe-4S] cluster is required as a cofactor.

It localises to the cytoplasm. It catalyses the reaction [[Fe-S] cluster scaffold protein carrying a second [4Fe-4S](2+) cluster] + N(6)-octanoyl-L-lysyl-[protein] + 2 oxidized [2Fe-2S]-[ferredoxin] + 2 S-adenosyl-L-methionine + 4 H(+) = [[Fe-S] cluster scaffold protein] + N(6)-[(R)-dihydrolipoyl]-L-lysyl-[protein] + 4 Fe(3+) + 2 hydrogen sulfide + 2 5'-deoxyadenosine + 2 L-methionine + 2 reduced [2Fe-2S]-[ferredoxin]. It functions in the pathway protein modification; protein lipoylation via endogenous pathway; protein N(6)-(lipoyl)lysine from octanoyl-[acyl-carrier-protein]. Catalyzes the radical-mediated insertion of two sulfur atoms into the C-6 and C-8 positions of the octanoyl moiety bound to the lipoyl domains of lipoate-dependent enzymes, thereby converting the octanoylated domains into lipoylated derivatives. This chain is Lipoyl synthase, found in Bacillus cytotoxicus (strain DSM 22905 / CIP 110041 / 391-98 / NVH 391-98).